Consider the following 531-residue polypeptide: Flavin-containing monooxygenase 3 (531 aa).

FAD-binding positions include 9–13 (GAGVS), glutamate 32, 40–41 (LW), and 61–62 (NS). NADP(+) contacts are provided by residues 60–61 (TN) and 195–198 (SGCD). Position 401 is a phosphoserine (serine 401). Residues 511-531 (YSHFLRLLAVPVLIALFLVLI) traverse the membrane as a helical segment.

The protein belongs to the FMO family. It depends on FAD as a cofactor. In terms of tissue distribution, detected in liver and kidney (at protein level). Expressed in kidney and liver. Weakly expressed in lung. Does not seem to be expressed in brain, adipose tissue, or muscle.

The protein resides in the microsome membrane. Its subcellular location is the endoplasmic reticulum membrane. It carries out the reaction trimethylamine + NADPH + O2 = trimethylamine N-oxide + NADP(+) + H2O. The enzyme catalyses N,N-dimethylaniline + NADPH + O2 + H(+) = N,N-dimethylaniline N-oxide + NADP(+) + H2O. The catalysed reaction is hypotaurine + NADPH + O2 + H(+) = taurine + NADP(+) + H2O. It catalyses the reaction (S)-nicotine + NADPH + O2 = trans-(S)-nicotine N(1')-oxide + NADP(+) + H2O. It carries out the reaction albendazole + NADPH + O2 + H(+) = albendazole S-oxide + NADP(+) + H2O. Functionally, essential hepatic enzyme that catalyzes the oxygenation of a wide variety of nitrogen- and sulfur-containing compounds including drugs as well as dietary compounds. Plays an important role in the metabolism of trimethylamine (TMA), via the production of trimethylamine N-oxide (TMAO) metabolite. TMA is generated by the action of gut microbiota using dietary precursors such as choline, choline containing compounds, betaine or L-carnitine. By regulating TMAO concentration, FMO3 directly impacts both platelet responsiveness and rate of thrombus formation. This Rattus norvegicus (Rat) protein is Flavin-containing monooxygenase 3 (Fmo3).